The primary structure comprises 288 residues: 3-methyl-2-oxobutanoate hydroxymethyltransferase (288 aa).

The Mg(2+) site is built by Asp48 and Asp87. Residues 48–49 (DS), Asp87, and Lys116 each bind 3-methyl-2-oxobutanoate. Glu118 serves as a coordination point for Mg(2+). The active-site Proton acceptor is the Glu185.

Belongs to the PanB family. Homodecamer; pentamer of dimers. The cofactor is Mg(2+).

The protein localises to the cytoplasm. The enzyme catalyses 3-methyl-2-oxobutanoate + (6R)-5,10-methylene-5,6,7,8-tetrahydrofolate + H2O = 2-dehydropantoate + (6S)-5,6,7,8-tetrahydrofolate. It participates in cofactor biosynthesis; coenzyme A biosynthesis. Functionally, catalyzes the reversible reaction in which hydroxymethyl group from 5,10-methylenetetrahydrofolate is transferred onto alpha-ketoisovalerate to form ketopantoate. This is 3-methyl-2-oxobutanoate hydroxymethyltransferase from Hyperthermus butylicus (strain DSM 5456 / JCM 9403 / PLM1-5).